A 278-amino-acid chain; its full sequence is Bis(5'-nucleosyl)-tetraphosphatase, symmetrical (278 aa).

The protein belongs to the Ap4A hydrolase family.

It carries out the reaction P(1),P(4)-bis(5'-adenosyl) tetraphosphate + H2O = 2 ADP + 2 H(+). Hydrolyzes diadenosine 5',5'''-P1,P4-tetraphosphate to yield ADP. This chain is Bis(5'-nucleosyl)-tetraphosphatase, symmetrical, found in Methylococcus capsulatus (strain ATCC 33009 / NCIMB 11132 / Bath).